Reading from the N-terminus, the 171-residue chain is Large ribosomal subunit protein bL9 (171 aa).

The protein belongs to the bacterial ribosomal protein bL9 family.

In terms of biological role, binds to the 23S rRNA. The sequence is that of Large ribosomal subunit protein bL9 from Rickettsia prowazekii (strain Madrid E).